The sequence spans 273 residues: Soluble P-type ATPase-like phosphatase (273 aa).

Residue D8 is the 4-aspartylphosphate intermediate of the active site.

Belongs to the cation transport ATPase (P-type) (TC 3.A.3) family. Type IB subfamily. Mg(2+) serves as cofactor.

With respect to regulation, inhibited by orthovanadate. Most probably acts as a phosphatase in the cytosol. The chain is Soluble P-type ATPase-like phosphatase (patS) from Methanocaldococcus jannaschii (strain ATCC 43067 / DSM 2661 / JAL-1 / JCM 10045 / NBRC 100440) (Methanococcus jannaschii).